Reading from the N-terminus, the 696-residue chain is Equisetin cluster transcription factor eqxF (696 aa).

Disordered stretches follow at residues 1 to 24 (MADQ…GRAR) and 73 to 117 (NQEQ…PADY).

The protein localises to the nucleus. Its function is as follows. Transcription factor that regulates the expression of the gene cluster that mediates the biosynthesis of Equisetin. This chain is Equisetin cluster transcription factor eqxF, found in Fusarium heterosporum.